An 81-amino-acid chain; its full sequence is Photosystem I iron-sulfur center (81 aa).

2 consecutive 4Fe-4S ferredoxin-type domains span residues 2–31 (SHSV…MVPW) and 39–68 (IASS…IRVY). The [4Fe-4S] cluster site is built by Cys-11, Cys-14, Cys-17, Cys-21, Cys-48, Cys-51, Cys-54, and Cys-58.

The cyanobacterial PSI reaction center is composed of one copy each of PsaA,B,C,D,E,F,I,J,K,L,M and X, and forms trimeric complexes. [4Fe-4S] cluster serves as cofactor.

The protein localises to the cellular thylakoid membrane. The catalysed reaction is reduced [plastocyanin] + hnu + oxidized [2Fe-2S]-[ferredoxin] = oxidized [plastocyanin] + reduced [2Fe-2S]-[ferredoxin]. In terms of biological role, apoprotein for the two 4Fe-4S centers FA and FB of photosystem I (PSI); essential for photochemical activity. FB is the terminal electron acceptor of PSI, donating electrons to ferredoxin. The C-terminus interacts with PsaA/B/D and helps assemble the protein into the PSI complex. Required for binding of PsaD and PsaE to PSI. PSI is a plastocyanin/cytochrome c6-ferredoxin oxidoreductase, converting photonic excitation into a charge separation, which transfers an electron from the donor P700 chlorophyll pair to the spectroscopically characterized acceptors A0, A1, FX, FA and FB in turn. Functionally, mutant proteins with a 3Fe-4S center are unable to reconstitute PSI activity in vivo. The chain is Photosystem I iron-sulfur center from Synechocystis sp. (strain ATCC 27184 / PCC 6803 / Kazusa).